We begin with the raw amino-acid sequence, 564 residues long: E3 ubiquitin-protein ligase TRIM16 (564 aa).

The disordered stretch occupies residues Met-1 to Gly-70. The span at Ser-24–Pro-39 shows a compositional bias: low complexity. B box-type zinc fingers lie at residues Gly-72 to Pro-122 and His-126 to Leu-165. Ser-116 is subject to Phosphoserine. The Zn(2+) site is built by Cys-131, His-134, Cys-153, and His-157. 3 coiled-coil regions span residues Leu-165 to Ser-203, Ala-243 to Ala-274, and His-320 to Glu-340. Phosphoserine is present on Ser-203. One can recognise a B30.2/SPRY domain in the interval Tyr-355–Glu-553.

This sequence belongs to the TRIM/RBCC family. As to quaternary structure, homodimerizes via its coiled-coil domain. Heterodimerizes with MID1, TRIM24 and PML. Interacts with Galectin-3/LGALS3 in a ULK1-dependent manner; this interaction mediates autophagy of damage endomembranes. Interacts with BECN1. Interacts with ATG16L1. Interacts with p62/SQSTM and LC3B/MAP1LC3B. Phosphorylated by ULK1. In terms of processing, auto-ubiquitinates via its B-Boxes.

It localises to the cytoplasm. It catalyses the reaction S-ubiquitinyl-[E2 ubiquitin-conjugating enzyme]-L-cysteine + [acceptor protein]-L-lysine = [E2 ubiquitin-conjugating enzyme]-L-cysteine + N(6)-ubiquitinyl-[acceptor protein]-L-lysine.. Functionally, E3 ubiquitin ligase that plays an essential role in the organization of autophagic response and ubiquitination upon lysosomal and phagosomal damages. Plays a role in the stress-induced biogenesis and degradation of protein aggresomes by regulating the p62-KEAP1-NRF2 signaling and particularly by modulating the ubiquitination levels and thus stability of NRF2. Acts as a scaffold protein and facilitates autophagic degradation of protein aggregates by interacting with p62/SQSTM, ATG16L1 and LC3B/MAP1LC3B. In turn, protects the cell against oxidative stress-induced cell death as a consequence of endomembrane damage. In Pongo abelii (Sumatran orangutan), this protein is E3 ubiquitin-protein ligase TRIM16 (TRIM16).